The primary structure comprises 359 residues: MSTENTLSVADLARENVRNLIPYQSARRLGGNGDVWLNANEFPTAVEFQLTQQTLNRYPECQPKAVIENYAQYAGVKPEQVLVSRGADEGIELMIRAFCEPGKDAILYCPPTYGMYSVSAETIGVARRTVPTLENWQLDLQGIYDNLDGAKVVFVCSPNNPTGQLINPQDLRTLLELTRGKAMVVADEAYIEFCPQATLAGWLVEYPHLVILRTLSKAFALAGLRCGFTLANEEVINLLLKVIAPYPLSTPVADIAAQALSPRGINAMRERVRLIVQERQHLVNGLQQAACLEHVFDSETNYILARFTASSSVFKSLWDQGIILRDQNKQPSLSGCLRITVGTRQENQRVIDALRAEPV.

An N6-(pyridoxal phosphate)lysine modification is found at Lys-217.

This sequence belongs to the class-II pyridoxal-phosphate-dependent aminotransferase family. Histidinol-phosphate aminotransferase subfamily. In terms of assembly, homodimer. The cofactor is pyridoxal 5'-phosphate.

The catalysed reaction is L-histidinol phosphate + 2-oxoglutarate = 3-(imidazol-4-yl)-2-oxopropyl phosphate + L-glutamate. The protein operates within amino-acid biosynthesis; L-histidine biosynthesis; L-histidine from 5-phospho-alpha-D-ribose 1-diphosphate: step 7/9. This is Histidinol-phosphate aminotransferase from Salmonella arizonae (strain ATCC BAA-731 / CDC346-86 / RSK2980).